Here is a 348-residue protein sequence, read N- to C-terminus: UDP-3-O-acylglucosamine N-acyltransferase (348 aa).

Histidine 243 acts as the Proton acceptor in catalysis.

Belongs to the transferase hexapeptide repeat family. LpxD subfamily. In terms of assembly, homotrimer.

It catalyses the reaction a UDP-3-O-[(3R)-3-hydroxyacyl]-alpha-D-glucosamine + a (3R)-hydroxyacyl-[ACP] = a UDP-2-N,3-O-bis[(3R)-3-hydroxyacyl]-alpha-D-glucosamine + holo-[ACP] + H(+). Its pathway is bacterial outer membrane biogenesis; LPS lipid A biosynthesis. Its function is as follows. Catalyzes the N-acylation of UDP-3-O-acylglucosamine using 3-hydroxyacyl-ACP as the acyl donor. Is involved in the biosynthesis of lipid A, a phosphorylated glycolipid that anchors the lipopolysaccharide to the outer membrane of the cell. The sequence is that of UDP-3-O-acylglucosamine N-acyltransferase from Hahella chejuensis (strain KCTC 2396).